The following is a 275-amino-acid chain: Cis-2,3-dihydrobiphenyl-2,3-diol dehydrogenase (275 aa).

9 to 33 lines the NAD(+) pocket; that stretch reads LITGGASGLGRALVDRFVAEAKVAV. Ser140 is a binding site for substrate. Tyr153 functions as the Proton acceptor in the catalytic mechanism.

The protein belongs to the short-chain dehydrogenases/reductases (SDR) family.

The catalysed reaction is (2R,3S)-3-phenylcyclohexa-3,5-diene-1,2-diol + NAD(+) = biphenyl-2,3-diol + NADH + H(+). The protein operates within xenobiotic degradation; biphenyl degradation; 2-hydroxy-2,4-pentadienoate and benzoate from biphenyl: step 2/4. This Metapseudomonas furukawaii (Pseudomonas furukawaii) protein is Cis-2,3-dihydrobiphenyl-2,3-diol dehydrogenase (bphB).